The sequence spans 278 residues: 4-deoxy-L-threo-5-hexosulose-uronate ketol-isomerase (278 aa).

Positions 196, 198, 203, and 245 each coordinate Zn(2+).

It belongs to the KduI family. It depends on Zn(2+) as a cofactor.

It catalyses the reaction 5-dehydro-4-deoxy-D-glucuronate = 3-deoxy-D-glycero-2,5-hexodiulosonate. It functions in the pathway glycan metabolism; pectin degradation; 2-dehydro-3-deoxy-D-gluconate from pectin: step 4/5. Functionally, catalyzes the isomerization of 5-dehydro-4-deoxy-D-glucuronate to 3-deoxy-D-glycero-2,5-hexodiulosonate. The polypeptide is 4-deoxy-L-threo-5-hexosulose-uronate ketol-isomerase (Shigella sonnei (strain Ss046)).